The sequence spans 876 residues: MQEQYRPAAIEPAAQKKWDDARIFNVSEDASKPKYYCLSMFPYPSGKLHMGHVRNYTIGDVLSRFKRLNGFNVMQPMGWDAFGMPAENAAMKNNVAPAAWTYDNIEYMKTQLKSLGFAIDWARETATCKPEYYRWEQWLFTKLFEKGIVYRKNGTVNWDPVDQTVLANEQVIDGRGWRSGALIEKREIPMYYFKITDYAEELLNDLDKLEHWPEQVKTMQRNWIGKSRGMTVRFAVSDDSKQGLEGDYARFLQVYTTRPDTLMGATYVAVAAEHPLATAAAADKPELQAFIAECKAGSVAEADMATMEKKGVPTGRYVVNPLNGDKLEVWIANYVLWGYGDGAVMAVPAHDERDFEFATKYSLPKKQVIAVGDNAFDANQWQEWYGDKENGVLVNSGDLDGMNFQTAFDAIAAKLQSQGAGEPKTQYRLRDWGISRQRYWGCPIPIVHCEQCGDVPVPADQLPVVLPENVVPDGMGSPLAKMPEFYETACPCCGGAAKRETDTMDTFMESSWYFFRYMSPKFSDGMVSAEAAKYWGAVDQYIGGIEHAILHLLYARFFTKLMRDEGLVNVDEPFERLLTQGMVVCETYYRENDKGGKDWINPADVELTFDDKGRPVSAVLKADGLPVVISGTEKMSKSKNNGVDPQELINAYGADTARLFMMFAAPPEQSLEWSDSGVEGAHRFLRRLWRTVYEYLKQGGAVKAFAGNQDGLSKELKDLRHKLHSTIAKVSDDYGRRQQFNTAIAAVMELLNQYDKTDTGSEQGRAVAQEVLETAVRLLWPIVPHICETLWSELNGAKLWEAGWPAVDEAALVKSEIEVMVQVNGKLRGKITVAADASKADLEAAALATEGAVKFMEGKPAKKIIVVPGRLVNIVV.

The short motif at P42–H52 is the 'HIGH' region element. A 'KMSKS' region motif is present at residues K634–S638. K637 contributes to the ATP binding site.

The protein belongs to the class-I aminoacyl-tRNA synthetase family.

It localises to the cytoplasm. It carries out the reaction tRNA(Leu) + L-leucine + ATP = L-leucyl-tRNA(Leu) + AMP + diphosphate. This Neisseria meningitidis serogroup C (strain 053442) protein is Leucine--tRNA ligase.